Here is a 287-residue protein sequence, read N- to C-terminus: Pantothenate synthetase (287 aa).

30-37 (MGNLHSGH) provides a ligand contact to ATP. Catalysis depends on histidine 37, which acts as the Proton donor. Glutamine 61 is a (R)-pantoate binding site. Glutamine 61 is a binding site for beta-alanine. Residue 149–152 (GEKD) coordinates ATP. Glutamine 155 contributes to the (R)-pantoate binding site. ATP is bound by residues valine 178 and 186–189 (LSSR).

It belongs to the pantothenate synthetase family. Homodimer.

The protein localises to the cytoplasm. It carries out the reaction (R)-pantoate + beta-alanine + ATP = (R)-pantothenate + AMP + diphosphate + H(+). The protein operates within cofactor biosynthesis; (R)-pantothenate biosynthesis; (R)-pantothenate from (R)-pantoate and beta-alanine: step 1/1. Functionally, catalyzes the condensation of pantoate with beta-alanine in an ATP-dependent reaction via a pantoyl-adenylate intermediate. This Pseudomonas putida (strain ATCC 47054 / DSM 6125 / CFBP 8728 / NCIMB 11950 / KT2440) protein is Pantothenate synthetase.